The following is a 3795-amino-acid chain: NBPF family member NBPF10 (3795 aa).

A coiled-coil region spans residues 75-119; the sequence is RQFKEEKLAEQLKQAEELRQYKVLVHSQERELTQLREKLREGRDA. The tract at residues 161 to 200 is disordered; the sequence is KLSPENDEDEDEDVQVEEAEKVLESSAPREVQKAEESKVP. Residues 165–177 are compositionally biased toward acidic residues; sequence ENDEDEDEDVQVE. The Olduvai 1 domain occupies 165–259; sequence ENDEDEDEDV…ECQDALNILP (95 aa). Basic and acidic residues predominate over residues 190–200; that stretch reads EVQKAEESKVP. Residues 346–390 are a coiled coil; it reads RQFKEEKLAEQLKQAEELRQYKVLVHAQERELTQLKEKLREGRDA. 41 Olduvai domains span residues 436–528, 529–600, 601–692, 695–750, 751–843, 844–936, 939–994, 995–1087, 1088–1180, 1183–1238, 1239–1331, 1332–1424, 1427–1482, 1483–1575, 1576–1668, 1671–1726, 1727–1819, 1820–1912, 1915–1970, 1971–2063, 2064–2156, 2159–2214, 2215–2307, 2308–2400, 2403–2458, 2459–2551, 2552–2644, 2647–2702, 2703–2795, 2796–2888, 2891–2946, 2947–3039, 3040–3132, 3135–3190, 3191–3283, 3284–3376, 3379–3434, 3435–3527, 3528–3620, 3623–3696, and 3697–3795; these read ENDN…HIIP, ENES…VDIG, RHRW…PSCP, SREL…LDVD, RIKK…RSKK, ERRR…PSCP, SREL…RSKK, and ERRR…IFPQ. Disordered stretches follow at residues 451–475 and 520–566; these read EKVQ…EDSL and WEDA…EGYS. Composition is skewed to acidic residues over residues 530-539 and 550-562; these read NESDDEEEEE and ESEE…ESWD. The disordered stretch occupies residues 830 to 868; that stretch reads KGKGKKRRGRRSKKERRRGRKEGEEDQNPPCPRLSRELL. Residues 831–849 show a composition bias toward basic residues; that stretch reads GKGKKRRGRRSKKERRRGR. The interval 1073–1109 is disordered; sequence KKGKGKKRRGRRSKKERRRGRKEGEEDQNPPCPRLSR. Residues 1075–1093 show a composition bias toward basic residues; that stretch reads GKGKKRRGRRSKKERRRGR. 2 disordered regions span residues 1242–1261 and 1318–1353; these read KDEE…SREL and KGKG…RLSR. Basic residues predominate over residues 1319–1337; sequence GKGKKRRGRRSKKERRRGR. Positions 1562 to 1600 are disordered; it reads KGKGKKRRGRRSKKERRRGRKEGEEDQNPPCPRLSRELL. Basic residues predominate over residues 1563-1581; sequence GKGKKRRGRRSKKERRRGR. Positions 1806–1844 are disordered; that stretch reads KGKGKKRRGRRSKKERRRGRKEGEEDQNPPCPRLSRELL. Basic residues predominate over residues 1807 to 1825; that stretch reads GKGKKRRGRRSKKERRRGR. Residues 2050–2088 are disordered; that stretch reads KGKGKKRRGRRSKKERRRGRKEGEEDQNPPCPRLSRELL. Residues 2051 to 2069 show a composition bias toward basic residues; it reads GKGKKRRGRRSKKERRRGR. A disordered region spans residues 2294-2332; that stretch reads KGKGKKRRGRRSKKERRRGRKEGEEDQNPPCPRLSRELL. Over residues 2295–2313 the composition is skewed to basic residues; it reads GKGKKRRGRRSKKERRRGR. Residues 2538-2576 form a disordered region; it reads KGKGKKRRGRRSKKERRRGRKEGEEDQNPPCPRLSRELL. The segment covering 2539 to 2557 has biased composition (basic residues); the sequence is GKGKKRRGRRSKKERRRGR. A disordered region spans residues 2782–2820; that stretch reads KGKGKKRRGRRSKKERRRGRKEGEEDQNPPCPRLSRELL. The segment covering 2783-2801 has biased composition (basic residues); sequence GKGKKRRGRRSKKERRRGR. The segment at 3026–3064 is disordered; the sequence is KGKGKKRRGRRSKKERRRGRKEGEEDQNPPCPRLSRELL. Residues 3027-3045 are compositionally biased toward basic residues; the sequence is GKGKKRRGRRSKKERRRGR. Disordered regions lie at residues 3194–3213 and 3270–3308; these read KDEE…SREL and KGKG…RELL. The segment covering 3271-3289 has biased composition (basic residues); sequence GKGKKRRGRRSKKERRRGR. 2 disordered regions span residues 3514–3552 and 3684–3716; these read KGKG…RELL and GKGK…CPRL. 2 stretches are compositionally biased toward basic residues: residues 3515–3533 and 3684–3702; these read GKGK…RRGR.

The protein belongs to the NBPF family.

The protein localises to the cytoplasm. This is NBPF family member NBPF10 from Homo sapiens (Human).